Consider the following 864-residue polypeptide: Seed linoleate 9S-lipoxygenase-2 (864 aa).

A PLAT domain is found at 46–171 (SGINIIGSTL…LYKSPRIFFA (126 aa)). Positions 174–864 (SYLPSETPSP…FRGIPNSISI (691 aa)) constitute a Lipoxygenase domain. The interval 230 to 264 (PILGGSSTHPYPRRGRTGRYPTRKDPNSEKPATET) is disordered. Over residues 251 to 264 (TRKDPNSEKPATET) the composition is skewed to basic and acidic residues. Residues H524, H529, H716, N720, and I864 each coordinate Fe cation.

The protein belongs to the lipoxygenase family. It depends on Fe cation as a cofactor.

The protein resides in the cytoplasm. The enzyme catalyses (9Z,12Z)-octadecadienoate + O2 = (9S)-hydroperoxy-(10E,12Z)-octadecadienoate. Its pathway is lipid metabolism; oxylipin biosynthesis. Functionally, plant lipoxygenase may be involved in a number of diverse aspects of plant physiology including growth and development, pest resistance, and senescence or responses to wounding. It catalyzes the hydroperoxidation of lipids containing a cis,cis-1,4-pentadiene structure. This chain is Seed linoleate 9S-lipoxygenase-2 (LOX1.2), found in Pisum sativum (Garden pea).